A 425-amino-acid chain; its full sequence is Serine--tRNA ligase (425 aa).

230–232 (TAE) provides a ligand contact to L-serine. 261–263 (RSE) serves as a coordination point for ATP. Glutamate 284 contacts L-serine. ATP is bound at residue 348 to 351 (EISS). Position 384 (serine 384) interacts with L-serine.

The protein belongs to the class-II aminoacyl-tRNA synthetase family. Type-1 seryl-tRNA synthetase subfamily. In terms of assembly, homodimer. The tRNA molecule binds across the dimer.

It is found in the cytoplasm. The catalysed reaction is tRNA(Ser) + L-serine + ATP = L-seryl-tRNA(Ser) + AMP + diphosphate + H(+). It carries out the reaction tRNA(Sec) + L-serine + ATP = L-seryl-tRNA(Sec) + AMP + diphosphate + H(+). Its pathway is aminoacyl-tRNA biosynthesis; selenocysteinyl-tRNA(Sec) biosynthesis; L-seryl-tRNA(Sec) from L-serine and tRNA(Sec): step 1/1. Functionally, catalyzes the attachment of serine to tRNA(Ser). Is also able to aminoacylate tRNA(Sec) with serine, to form the misacylated tRNA L-seryl-tRNA(Sec), which will be further converted into selenocysteinyl-tRNA(Sec). The polypeptide is Serine--tRNA ligase (Streptococcus equi subsp. zooepidemicus (strain MGCS10565)).